Consider the following 434-residue polypeptide: Enolase A (434 aa).

Residues His-160 and Glu-169 each coordinate substrate. Catalysis depends on Glu-212, which acts as the Proton donor. Residues Asp-247, Glu-296, and Asp-321 each contribute to the Mg(2+) site. Substrate-binding residues include Glu-296 and Asp-321. The active-site Proton acceptor is the Lys-346. Substrate-binding positions include 373–376 and Lys-397; that span reads SHRS.

Belongs to the enolase family. Homodimer. Mg(2+) is required as a cofactor.

The protein resides in the cytoplasm. The catalysed reaction is (2R)-2-phosphoglycerate = phosphoenolpyruvate + H2O. It functions in the pathway carbohydrate degradation; glycolysis; pyruvate from D-glyceraldehyde 3-phosphate: step 4/5. The sequence is that of Enolase A (enoA) from Dictyostelium discoideum (Social amoeba).